The primary structure comprises 228 residues: 7-cyano-7-deazaguanine synthase (228 aa).

10 to 20 (FSGGQDSTTLA) contacts ATP. Cysteine 190, cysteine 205, cysteine 208, and cysteine 211 together coordinate Zn(2+).

The protein belongs to the QueC family. Requires Zn(2+) as cofactor.

It catalyses the reaction 7-carboxy-7-deazaguanine + NH4(+) + ATP = 7-cyano-7-deazaguanine + ADP + phosphate + H2O + H(+). The protein operates within purine metabolism; 7-cyano-7-deazaguanine biosynthesis. Its function is as follows. Catalyzes the ATP-dependent conversion of 7-carboxy-7-deazaguanine (CDG) to 7-cyano-7-deazaguanine (preQ(0)). This is 7-cyano-7-deazaguanine synthase from Helicobacter pylori (strain P12).